A 344-amino-acid chain; its full sequence is Methylthioribose-1-phosphate isomerase (344 aa).

Residues 46 to 48 (RGA), Arg-89, and Gln-196 each bind substrate. Asp-237 serves as the catalytic Proton donor. Residue 247–248 (NK) coordinates substrate.

This sequence belongs to the eIF-2B alpha/beta/delta subunits family. MtnA subfamily.

It catalyses the reaction 5-(methylsulfanyl)-alpha-D-ribose 1-phosphate = 5-(methylsulfanyl)-D-ribulose 1-phosphate. The protein operates within amino-acid biosynthesis; L-methionine biosynthesis via salvage pathway; L-methionine from S-methyl-5-thio-alpha-D-ribose 1-phosphate: step 1/6. In terms of biological role, catalyzes the interconversion of methylthioribose-1-phosphate (MTR-1-P) into methylthioribulose-1-phosphate (MTRu-1-P). This chain is Methylthioribose-1-phosphate isomerase, found in Syntrophotalea carbinolica (strain DSM 2380 / NBRC 103641 / GraBd1) (Pelobacter carbinolicus).